We begin with the raw amino-acid sequence, 442 residues long: UDP-glycosyltransferase 79B7 (442 aa).

UDP-alpha-D-glucose contacts are provided by residues Ser-260, 319–321 (VQQ), 336–344 (HCGPGTIWE), and 358–361 (LSDQ).

This sequence belongs to the UDP-glycosyltransferase family.

This chain is UDP-glycosyltransferase 79B7 (UGT79B7), found in Arabidopsis thaliana (Mouse-ear cress).